Reading from the N-terminus, the 1370-residue chain is DNA-directed RNA polymerase subunit beta (1370 aa).

This sequence belongs to the RNA polymerase beta chain family. The RNAP catalytic core consists of 2 alpha, 1 beta, 1 beta' and 1 omega subunit. When a sigma factor is associated with the core the holoenzyme is formed, which can initiate transcription.

It catalyses the reaction RNA(n) + a ribonucleoside 5'-triphosphate = RNA(n+1) + diphosphate. In terms of biological role, DNA-dependent RNA polymerase catalyzes the transcription of DNA into RNA using the four ribonucleoside triphosphates as substrates. The polypeptide is DNA-directed RNA polymerase subunit beta (Geotalea daltonii (strain DSM 22248 / JCM 15807 / FRC-32) (Geobacter daltonii)).